The chain runs to 127 residues: Small ribosomal subunit protein uS11 (127 aa).

It belongs to the universal ribosomal protein uS11 family. Part of the 30S ribosomal subunit. Interacts with proteins S7 and S18. Binds to IF-3.

Located on the platform of the 30S subunit, it bridges several disparate RNA helices of the 16S rRNA. Forms part of the Shine-Dalgarno cleft in the 70S ribosome. This Chlorobaculum parvum (strain DSM 263 / NCIMB 8327) (Chlorobium vibrioforme subsp. thiosulfatophilum) protein is Small ribosomal subunit protein uS11.